The primary structure comprises 210 residues: Thymidylate kinase (210 aa).

9-16 (GPEGAGKT) provides a ligand contact to ATP.

It belongs to the thymidylate kinase family.

The enzyme catalyses dTMP + ATP = dTDP + ADP. In terms of biological role, phosphorylation of dTMP to form dTDP in both de novo and salvage pathways of dTTP synthesis. This Thermomicrobium roseum (strain ATCC 27502 / DSM 5159 / P-2) protein is Thymidylate kinase.